The chain runs to 330 residues: Aspartate--ammonia ligase (330 aa).

The protein belongs to the class-II aminoacyl-tRNA synthetase family. AsnA subfamily.

Its subcellular location is the cytoplasm. The enzyme catalyses L-aspartate + NH4(+) + ATP = L-asparagine + AMP + diphosphate + H(+). It participates in amino-acid biosynthesis; L-asparagine biosynthesis; L-asparagine from L-aspartate (ammonia route): step 1/1. The protein is Aspartate--ammonia ligase of Escherichia coli O127:H6 (strain E2348/69 / EPEC).